We begin with the raw amino-acid sequence, 524 residues long: Zinc finger protein GLIS2 (524 aa).

The segment at 35–174 (ALHRELGLVD…PKQLVCRWAK (140 aa)) is interaction with CTNND1. 2 disordered regions span residues 39–62 (ELGL…FLLN) and 84–114 (SPPS…VPSA). A transcription activation region spans residues 71–137 (GRFSAAPLVD…SSFQFFLPLG (67 aa)). Low complexity predominate over residues 84–100 (SPPSGLDSPNGSSSLSP). The segment at 148–171 (SFLTPPKDKCLSPDLPLPKQLVCR) is transcription repression. The C2H2-type 1 zinc finger occupies 168–193 (LVCRWAKCNQLFELLQDLVDHVNDYH). The C2H2-type 2; atypical zinc-finger motif lies at 202-229 (YCCHWEGCARHGRGFNARYKMLIHIRTH). 3 C2H2-type zinc fingers span residues 235-257 (HRCP…NRSH), 263-287 (YVCP…TRTH), and 293-317 (YYCK…IKAH). The segment at 439–480 (GGKAEGEKGRGSVPTRALGMEGHKTPLERTESSCSRPSPDGL) is disordered. Residues 459–469 (EGHKTPLERTE) are compositionally biased toward basic and acidic residues.

This sequence belongs to the GLI C2H2-type zinc-finger protein family. In terms of assembly, interacts with CTBP1 and HDAC3. Interacts with CTNNB1. Interacts with SUFU. Interacts with CTNND1. In terms of processing, C-terminus cleavage is induced by interaction with CTNND1 and enhanced by Src tyrosine kinase. As to expression, expressed at high levels in kidney and at low levels in heart, lung and placenta. Expressed in colon.

The protein localises to the nucleus speckle. It localises to the cytoplasm. Its function is as follows. Can act either as a transcriptional repressor or as a transcriptional activator, depending on the cell context. Acts as a repressor of the Hedgehog signaling pathway. Represses the Hedgehog-dependent expression of Wnt4. Necessary to maintain the differentiated epithelial phenotype in renal cells through the inhibition of SNAI1, which itself induces the epithelial-to-mesenchymal transition. Represses transcriptional activation mediated by CTNNB1 in the Wnt signaling pathway. May act by recruiting the corepressors CTBP1 and HDAC3. May be involved in neuron differentiation. This Homo sapiens (Human) protein is Zinc finger protein GLIS2 (GLIS2).